A 195-amino-acid polypeptide reads, in one-letter code: UPF0314 protein RHECIAT_CH0004233 (195 aa).

4 consecutive transmembrane segments (helical) span residues 15–35 (FWFVACVAVLVAQIVTEYLMG), 64–84 (WYTPSHIIHGFLFYGLGYLIL), 127–147 (GDSILNSAMDTVFMCVGFFFA), and 150–170 (APVALTVAIAIFFEIFTGYVI).

This sequence belongs to the UPF0314 family.

The protein localises to the cell membrane. This Rhizobium etli (strain CIAT 652) protein is UPF0314 protein RHECIAT_CH0004233.